We begin with the raw amino-acid sequence, 197 residues long: Peptide deformylase (197 aa).

2 residues coordinate Fe cation: Cys106 and His148. Glu149 is an active-site residue. A Fe cation-binding site is contributed by His152.

The protein belongs to the polypeptide deformylase family. The cofactor is Fe(2+).

It catalyses the reaction N-terminal N-formyl-L-methionyl-[peptide] + H2O = N-terminal L-methionyl-[peptide] + formate. Removes the formyl group from the N-terminal Met of newly synthesized proteins. Requires at least a dipeptide for an efficient rate of reaction. N-terminal L-methionine is a prerequisite for activity but the enzyme has broad specificity at other positions. The polypeptide is Peptide deformylase (Mycobacterium marinum (strain ATCC BAA-535 / M)).